An 810-amino-acid polypeptide reads, in one-letter code: Probable dehydratase YbiW (810 aa).

One can recognise a PFL domain in the interval 11-682 (DRIKAHKNAL…QTMATPDGRK (672 aa)). The interval 677-699 (TPDGRKAHTPLAEGASPASGTDH) is disordered. In terms of domain architecture, Glycine radical spans 689–810 (EGASPASGTD…DIIARTEHML (122 aa)). Glycine 786 carries the glycine radical modification.

This sequence belongs to the glycyl radical enzyme (GRE) family.

Its function is as follows. Probably shows dehydratase activity. The protein is Probable dehydratase YbiW (ybiW) of Escherichia coli (strain K12).